The following is a 1144-amino-acid chain: Type II inositol polyphosphate 5-phosphatase 14 (1144 aa).

Disordered stretches follow at residues 15 to 67 (ASLV…FDSS) and 81 to 118 (GRTSGERGNGEECGFVTPPSKPASQGGGNDGGREDDIE). WD repeat units follow at residues 158–196 (ETQTGKFLRNIACTESQLWAGQENGVRFWNLEEAYEVGC), 216–255 (VPTSPALCLLVDHGNRLVWTGHKDGKIRAWKMNQPNTTTA), 269–307 (AHRGPVNYIVISSYGDMWSCSDGGVIKIWTLDSLEKSLV), 445–483 (EDTRKVEAIAIAADGSIWTGSMNGVIAQWDGNGSRLREV), and 524–561 (SHNEPVIKLAAGGGFIFSLATHGGVRGWYVTSPGPLDS). Catalytic regions lie at residues 791–807 (DLVAFFGDFNYRLFGIT) and 870–885 (KKRIPAWCDRVIYRDN). A Glycyl lysine isopeptide (Lys-Gly) (interchain with G-Cter in ubiquitin) cross-link involves residue K949. The span at 1111–1131 (TTMTKNLEGSTRYQTDANRGG) shows a compositional bias: polar residues. The disordered stretch occupies residues 1111-1144 (TTMTKNLEGSTRYQTDANRGGSTRHRTDDSTRRG). Positions 1135-1144 (HRTDDSTRRG) are enriched in basic and acidic residues.

Belongs to the inositol polyphosphate 5-phosphatase family. It depends on Mg(2+) as a cofactor. Expressed in young seedlings and flowers.

It catalyses the reaction a 1,2-diacyl-sn-glycero-3-phospho-(1D-myo-inositol-4,5-bisphosphate) + H2O = a 1,2-diacyl-sn-glycero-3-phospho-(1D-myo-inositol 4-phosphate) + phosphate. The catalysed reaction is a 1,2-diacyl-sn-glycero-3-phospho-(1D-myo-inositol-3,4,5-trisphosphate) + H2O = a 1,2-diacyl-sn-glycero-3-phospho-(1D-myo-inositol-3,4-bisphosphate) + phosphate. It carries out the reaction 1D-myo-inositol 1,4,5-trisphosphate + H2O = 1D-myo-inositol 1,4-bisphosphate + phosphate. Its function is as follows. Has phosphatase activity toward PtdIns(4,5)P2, PtdIns(3,4,5)P3 and Ins(1,4,5)P3. The protein is Type II inositol polyphosphate 5-phosphatase 14 of Arabidopsis thaliana (Mouse-ear cress).